Reading from the N-terminus, the 835-residue chain is Protein translocase subunit SecA (835 aa).

ATP contacts are provided by residues Q85, 103-107 (GEGKT), and D492. Positions 819, 821, 830, and 831 each coordinate Zn(2+).

Belongs to the SecA family. Monomer and homodimer. Part of the essential Sec protein translocation apparatus which comprises SecA, SecYEG and auxiliary proteins SecDF. Other proteins may also be involved. Zn(2+) is required as a cofactor.

It localises to the cell membrane. The protein localises to the cytoplasm. The enzyme catalyses ATP + H2O + cellular proteinSide 1 = ADP + phosphate + cellular proteinSide 2.. Part of the Sec protein translocase complex. Interacts with the SecYEG preprotein conducting channel. Has a central role in coupling the hydrolysis of ATP to the transfer of proteins into and across the cell membrane, serving as an ATP-driven molecular motor driving the stepwise translocation of polypeptide chains across the membrane. This Clostridium botulinum (strain Kyoto / Type A2) protein is Protein translocase subunit SecA.